We begin with the raw amino-acid sequence, 395 residues long: MINRQHIQLSLQSLSLVAGFMVWVLISSLISQITLDIHLSKGEISLVTAIPVILGSLLRIPLGYLTNRFGARLMFMVSFILLLFPVFWISIADSLFDLIAGGFFLGIGGAVFSIGVTSLPKYYPKEKHGVVNGIYGAGNIGTAVTTFAAPVIAQAVGWKSTVQMYLILLAVFALLHVLFGDRHEKKVKVSVKTQIKAVYRNHVLWFLSLFYFITFGAFVAFTIYLPNFLVEHFGLNPADAGLRTAGFIAVSTLLRPAGGFLADKMSPLRILMFVFAGLTLSGIILSFSPTIGLYTFGSLTVAVCSGIGNGTVFKLVPFYFSKQAGIANGIVSAMGGLGGFFPPLILASVFQATGQYAIGFMALSEVALASFVLVIWMYWQERMKTHTERNSQSIN.

12 helical membrane-spanning segments follow: residues 15–35, 44–64, 73–93, 96–116, 133–153, 160–180, 203–223, 240–262, 271–291, 293–313, 330–350, and 357–377; these read SLVAGFMVWVLISSLISQITL, ISLVTAIPVILGSLLRIPLGY, LMFMVSFILLLFPVFWISIAD, FDLIAGGFFLGIGGAVFSIGV, GIYGAGNIGTAVTTFAAPVIA, STVQMYLILLAVFALLHVLFG, VLWFLSLFYFITFGAFVAFTI, AGLRTAGFIAVSTLLRPAGGFLA, LMFVFAGLTLSGIILSFSPTI, LYTFGSLTVAVCSGIGNGTVF, IVSAMGGLGGFFPPLILASVF, and AIGFMALSEVALASFVLVIWM.

It belongs to the major facilitator superfamily. Nitrate/nitrite porter (TC 2.A.1.8) family.

It is found in the cell membrane. Its function is as follows. Involved in excretion of nitrite produced by the dissimilatory reduction of nitrate. This is Nitrite extrusion protein (narK) from Bacillus subtilis (strain 168).